The following is a 156-amino-acid chain: Small ribosomal subunit protein uS7c (156 aa).

Belongs to the universal ribosomal protein uS7 family. Part of the 30S ribosomal subunit.

It is found in the plastid. The protein localises to the chloroplast. Its function is as follows. One of the primary rRNA binding proteins, it binds directly to 16S rRNA where it nucleates assembly of the head domain of the 30S subunit. The sequence is that of Small ribosomal subunit protein uS7c (rps7) from Gracilaria tenuistipitata var. liui (Red alga).